A 501-amino-acid chain; its full sequence is Acetylcholine receptor subunit beta (501 aa).

The N-terminal stretch at 1–23 is a signal peptide; that stretch reads MTPGALLMLLGALGAPLAPGVRG. Residues 24 to 244 lie on the Extracellular side of the membrane; sequence SEAEGRLREK…VIFYLIIRRK (221 aa). A disulfide bridge connects residues Cys151 and Cys165. Residue Asn164 is glycosylated (N-linked (GlcNAc...) asparagine). The next 3 membrane-spanning stretches (helical) occupy residues 245-269, 277-295, and 311-332; these read PLFYLVNVIAPCILITLLAIFVFYL, MGLSIFALLTLTVFLLLLA, and YLMFTMVLVTFSVILSVVVLNL. The Cytoplasmic portion of the chain corresponds to 333–469; that stretch reads HHRSPHTHQM…WQFVAMVVDR (137 aa). The residue at position 390 (Tyr390) is a Phosphotyrosine; by Tyr-kinases. A helical transmembrane segment spans residues 470-488; sequence LFLWTFIIFTSVGTLVIFL.

Belongs to the ligand-gated ion channel (TC 1.A.9) family. Acetylcholine receptor (TC 1.A.9.1) subfamily. Beta-1/CHRNB1 sub-subfamily. In terms of assembly, pentamer of two alpha chains, and one each of the beta, delta, and gamma (in immature muscle) or epsilon (in mature muscle) chains. The muscle heteropentamer composed of alpha-1, beta-1, delta, epsilon subunits interacts with the alpha-conotoxin ImII.

It localises to the postsynaptic cell membrane. It is found in the cell membrane. It carries out the reaction K(+)(in) = K(+)(out). The catalysed reaction is Na(+)(in) = Na(+)(out). After binding acetylcholine, the AChR responds by an extensive change in conformation that affects all subunits and leads to opening of an ion-conducting channel across the plasma membrane. The polypeptide is Acetylcholine receptor subunit beta (Homo sapiens (Human)).